The chain runs to 345 residues: N-acetyl-gamma-glutamyl-phosphate reductase (345 aa).

The active site involves cysteine 149.

It belongs to the NAGSA dehydrogenase family. Type 1 subfamily.

Its subcellular location is the cytoplasm. The enzyme catalyses N-acetyl-L-glutamate 5-semialdehyde + phosphate + NADP(+) = N-acetyl-L-glutamyl 5-phosphate + NADPH + H(+). The protein operates within amino-acid biosynthesis; L-arginine biosynthesis; N(2)-acetyl-L-ornithine from L-glutamate: step 3/4. In terms of biological role, catalyzes the NADPH-dependent reduction of N-acetyl-5-glutamyl phosphate to yield N-acetyl-L-glutamate 5-semialdehyde. The protein is N-acetyl-gamma-glutamyl-phosphate reductase of Bacillus cytotoxicus (strain DSM 22905 / CIP 110041 / 391-98 / NVH 391-98).